We begin with the raw amino-acid sequence, 241 residues long: tRNA (guanine-N(7)-)-methyltransferase (241 aa).

Residues Gly-61, Glu-84, Arg-86, Asn-117, Ala-118, and Leu-137 each coordinate S-adenosyl-L-methionine. Residue Asp-140 is part of the active site. The tract at residues 141–149 (PHFKKTKHK) is alphaC helix. The S-adenosyl-L-methionine site is built by Thr-215 and Glu-217. The tract at residues 215–223 (TEEGKKVQR) is alpha6 helix.

The protein belongs to the class I-like SAM-binding methyltransferase superfamily. TrmB family. As to quaternary structure, catalytic component of the METTL1-WDR4 complex, composed of mettl1 and wdr4.

It is found in the nucleus. It carries out the reaction guanosine(46) in tRNA + S-adenosyl-L-methionine = N(7)-methylguanosine(46) in tRNA + S-adenosyl-L-homocysteine. It catalyses the reaction a guanosine in mRNA + S-adenosyl-L-methionine = an N(7)-methylguanosine in mRNA + S-adenosyl-L-homocysteine. The catalysed reaction is a guanosine in miRNA + S-adenosyl-L-methionine = an N(7)-methylguanosine in miRNA + S-adenosyl-L-homocysteine. It functions in the pathway tRNA modification; N(7)-methylguanine-tRNA biosynthesis. Functionally, catalytic component of METTL1-WDR4 methyltransferase complex that mediates the formation of N(7)-methylguanine in a subset of RNA species, such as tRNAs, mRNAs and microRNAs (miRNAs). Catalyzes the formation of N(7)-methylguanine at position 46 (m7G46) in a large subset of tRNAs that contain the 5'-RAGGU-3' motif within the variable loop. M7G46 interacts with C13-G22 in the D-loop to stabilize tRNA tertiary structure and protect tRNAs from decay. Also acts as a methyltransferase for a subset of internal N(7)-methylguanine in mRNAs. Internal N(7)-methylguanine methylation of mRNAs in response to stress promotes their relocalization to stress granules, thereby suppressing their translation. Also methylates a specific subset of miRNAs. This is tRNA (guanine-N(7)-)-methyltransferase (mettl1) from Danio rerio (Zebrafish).